Reading from the N-terminus, the 218-residue chain is MYDIRQMLQLYFIAGTQDCPNPTEDRSQNLLLILEQALQAGITCFQFRDKSKNSLEDQPNAQKALAIQCRDLCRLYNVPFIVDDNVALAIEIDADGVHVGQKDMSPIMIRQMTDKPLIIGLSNNTLEDLWRSEQMIEVDYCGLGPVFPTNSKEKHNPPIGLDFVKKAREAGIRKPIVSIGGVKAEHVATLKQNGADGVAVITAISLASDVSQAVKRLL.

Residues 46–50 (QFRDK) and aspartate 83 each bind 4-amino-2-methyl-5-(diphosphooxymethyl)pyrimidine. Aspartate 84 and aspartate 103 together coordinate Mg(2+). Serine 122 provides a ligand contact to 4-amino-2-methyl-5-(diphosphooxymethyl)pyrimidine. Position 149 to 151 (149 to 151 (TNS)) interacts with 2-[(2R,5Z)-2-carboxy-4-methylthiazol-5(2H)-ylidene]ethyl phosphate. Lysine 152 is a 4-amino-2-methyl-5-(diphosphooxymethyl)pyrimidine binding site. Residues glycine 181 and 201-202 (IT) contribute to the 2-[(2R,5Z)-2-carboxy-4-methylthiazol-5(2H)-ylidene]ethyl phosphate site.

This sequence belongs to the thiamine-phosphate synthase family. Mg(2+) serves as cofactor.

It carries out the reaction 2-[(2R,5Z)-2-carboxy-4-methylthiazol-5(2H)-ylidene]ethyl phosphate + 4-amino-2-methyl-5-(diphosphooxymethyl)pyrimidine + 2 H(+) = thiamine phosphate + CO2 + diphosphate. The catalysed reaction is 2-(2-carboxy-4-methylthiazol-5-yl)ethyl phosphate + 4-amino-2-methyl-5-(diphosphooxymethyl)pyrimidine + 2 H(+) = thiamine phosphate + CO2 + diphosphate. The enzyme catalyses 4-methyl-5-(2-phosphooxyethyl)-thiazole + 4-amino-2-methyl-5-(diphosphooxymethyl)pyrimidine + H(+) = thiamine phosphate + diphosphate. The protein operates within cofactor biosynthesis; thiamine diphosphate biosynthesis; thiamine phosphate from 4-amino-2-methyl-5-diphosphomethylpyrimidine and 4-methyl-5-(2-phosphoethyl)-thiazole: step 1/1. Its function is as follows. Condenses 4-methyl-5-(beta-hydroxyethyl)thiazole monophosphate (THZ-P) and 2-methyl-4-amino-5-hydroxymethyl pyrimidine pyrophosphate (HMP-PP) to form thiamine monophosphate (TMP). The sequence is that of Thiamine-phosphate synthase from Actinobacillus pleuropneumoniae serotype 7 (strain AP76).